We begin with the raw amino-acid sequence, 417 residues long: Serine hydroxymethyltransferase (417 aa).

Residues L121 and 125–127 (GHL) each bind (6S)-5,6,7,8-tetrahydrofolate. K229 carries the post-translational modification N6-(pyridoxal phosphate)lysine. 355-357 (SPF) is a binding site for (6S)-5,6,7,8-tetrahydrofolate.

It belongs to the SHMT family. Homodimer. Pyridoxal 5'-phosphate serves as cofactor.

It is found in the cytoplasm. It catalyses the reaction (6R)-5,10-methylene-5,6,7,8-tetrahydrofolate + glycine + H2O = (6S)-5,6,7,8-tetrahydrofolate + L-serine. It functions in the pathway one-carbon metabolism; tetrahydrofolate interconversion. The protein operates within amino-acid biosynthesis; glycine biosynthesis; glycine from L-serine: step 1/1. In terms of biological role, catalyzes the reversible interconversion of serine and glycine with tetrahydrofolate (THF) serving as the one-carbon carrier. This reaction serves as the major source of one-carbon groups required for the biosynthesis of purines, thymidylate, methionine, and other important biomolecules. Also exhibits THF-independent aldolase activity toward beta-hydroxyamino acids, producing glycine and aldehydes, via a retro-aldol mechanism. This chain is Serine hydroxymethyltransferase, found in Klebsiella pneumoniae (strain 342).